The sequence spans 157 residues: Small ribosomal subunit protein uS7 (157 aa).

This sequence belongs to the universal ribosomal protein uS7 family. Part of the 30S ribosomal subunit. Contacts proteins S9 and S11.

Its function is as follows. One of the primary rRNA binding proteins, it binds directly to 16S rRNA where it nucleates assembly of the head domain of the 30S subunit. Is located at the subunit interface close to the decoding center, probably blocks exit of the E-site tRNA. In Francisella philomiragia subsp. philomiragia (strain ATCC 25017 / CCUG 19701 / FSC 153 / O#319-036), this protein is Small ribosomal subunit protein uS7.